Reading from the N-terminus, the 138-residue chain is Beta-galactosidase (138 aa).

It belongs to the glycosyl hydrolase 2 family.

The enzyme catalyses Hydrolysis of terminal non-reducing beta-D-galactose residues in beta-D-galactosides.. The protein is Beta-galactosidase (lacZ) of Rhizobium radiobacter (Agrobacterium tumefaciens).